Here is a 129-residue protein sequence, read N- to C-terminus: Virion-associated protein (129 aa).

Coiled coils occupy residues 1 to 31 and 38 to 59; these read MANL…ILEM and IKES…LIND. A capsid binding region spans residues 122-129; it reads PAGWPNQF.

The protein belongs to the caulimovirus ORF III family. Homotetramer, through coiled-coil domain. Homotrimer when interacts with icosehadral capsid. Interacts with capsid protein, and with Movement protein.

It is found in the virion. Its subcellular location is the host cell junction. It localises to the host plasmodesma. Its function is as follows. Plays a role in virus cell-to-cell and plant-to-plant transmission. Interacts with virion icosahedral capsid and movement protein, thereby facilitating virion cell-to-cell transmission through plasmodesmata opened by viral movement protein. Also interacts with aphid transmission factor, attaching the virion to aphid stylet when the animal feeds on an virus infected plant. Aphid saliva may later detach the virion, inducing release of infectious particles when the animal feeds on a new plant. This Arabidopsis thaliana (Mouse-ear cress) protein is Virion-associated protein.